We begin with the raw amino-acid sequence, 102 residues long: Salivary protein Salp9 (102 aa).

Residues 1–21 (MGLTEIMLVLVSLAFVATAAA) form the signal peptide. N-linked (GlcNAc...) asparagine glycans are attached at residues asparagine 26 and asparagine 87. A disordered region spans residues 83–102 (SGVPNDTDAKIEETEEELEA).

Belongs to the salp14 family. Salivary gland (at protein level). Saliva (at protein level). Midgut.

Its subcellular location is the secreted. In terms of biological role, salivary protein that facilitates blood feeding of adult ticks on vertebrate species. Inhibits the lectin pathway of complement system activation in the host. This chain is Salivary protein Salp9, found in Ixodes scapularis (Black-legged tick).